The primary structure comprises 624 residues: UvrABC system protein C (624 aa).

The GIY-YIG domain maps to 25-104 (AEPGVYFMRD…IKQHQPHFNV (80 aa)). Residues 214 to 249 (SELIDTLTPQMEAAAENLNFEQAARIRDQINGLKTL) enclose the UVR domain.

It belongs to the UvrC family. As to quaternary structure, interacts with UvrB in an incision complex.

The protein resides in the cytoplasm. Its function is as follows. The UvrABC repair system catalyzes the recognition and processing of DNA lesions. UvrC both incises the 5' and 3' sides of the lesion. The N-terminal half is responsible for the 3' incision and the C-terminal half is responsible for the 5' incision. This Cyanothece sp. (strain PCC 7425 / ATCC 29141) protein is UvrABC system protein C.